The chain runs to 362 residues: Chorismate synthase (362 aa).

Residue Arg47 participates in NADP(+) binding. FMN is bound by residues 124-126 (RSS), Gly286, 301-305 (KPTAT), and Arg327.

Belongs to the chorismate synthase family. In terms of assembly, homotetramer. The cofactor is FMNH2.

The enzyme catalyses 5-O-(1-carboxyvinyl)-3-phosphoshikimate = chorismate + phosphate. It functions in the pathway metabolic intermediate biosynthesis; chorismate biosynthesis; chorismate from D-erythrose 4-phosphate and phosphoenolpyruvate: step 7/7. Its function is as follows. Catalyzes the anti-1,4-elimination of the C-3 phosphate and the C-6 proR hydrogen from 5-enolpyruvylshikimate-3-phosphate (EPSP) to yield chorismate, which is the branch point compound that serves as the starting substrate for the three terminal pathways of aromatic amino acid biosynthesis. This reaction introduces a second double bond into the aromatic ring system. This is Chorismate synthase from Rippkaea orientalis (strain PCC 8801 / RF-1) (Cyanothece sp. (strain PCC 8801)).